A 409-amino-acid polypeptide reads, in one-letter code: 2,3-bisphosphoglycerate-independent phosphoglycerate mutase 1 (409 aa).

Positions 163–173 are enriched in basic and acidic residues; sequence SDADPKVEGKP. Residues 163 to 184 are disordered; it reads SDADPKVEGKPPKKIKALDGSP.

This sequence belongs to the BPG-independent phosphoglycerate mutase family. A-PGAM subfamily.

It catalyses the reaction (2R)-2-phosphoglycerate = (2R)-3-phosphoglycerate. The protein operates within carbohydrate degradation; glycolysis; pyruvate from D-glyceraldehyde 3-phosphate: step 3/5. In terms of biological role, catalyzes the interconversion of 2-phosphoglycerate and 3-phosphoglycerate. This Methanothermobacter thermautotrophicus (strain ATCC 29096 / DSM 1053 / JCM 10044 / NBRC 100330 / Delta H) (Methanobacterium thermoautotrophicum) protein is 2,3-bisphosphoglycerate-independent phosphoglycerate mutase 1 (apgM1).